We begin with the raw amino-acid sequence, 84 residues long: Cytochrome c oxidase subunit 12, mitochondrial (84 aa).

In terms of domain architecture, CHCH spans T27–W70. The Cx9C motif signature appears at C30–C40. Cystine bridges form between C30/C62 and C40/C51. Residues C51–C62 carry the Cx10C motif motif.

This sequence belongs to the cytochrome c oxidase subunit 6B family. Component of the cytochrome c oxidase (complex IV, CIV), a multisubunit enzyme composed of 11 subunits. The complex is composed of a catalytic core of 3 subunits Cox1, Cox2 and Cox3, encoded in the mitochondrial DNA, and 8 supernumerary subunits Cox4, Cox5a/Cox5, Cox6, Cox7, Cox8, Cox7a/Cox9, Cox6b/Cox12 and Cox6a/Cox13, which are encoded in the nuclear genome. The complex exists as a monomer or a dimer and forms respiratory supercomplexes (SCs) in the inner mitochondrial membrane with NADH-ubiquinone oxidoreductase (complex I, CI) and ubiquinol-cytochrome c oxidoreductase (cytochrome b-c1 complex, complex III, CIII), resulting in various different assemblies (supercomplexes I(1)IV(1), I(1)III(3)IV(2), III(2)IV(1) and III(2)IV(2) as well as larger supercomplexes of compositions like I(1)III(2)IV(5-6)).

It is found in the mitochondrion inner membrane. Its pathway is energy metabolism; oxidative phosphorylation. In terms of biological role, component of the cytochrome c oxidase, the last enzyme in the mitochondrial electron transport chain which drives oxidative phosphorylation. The respiratory chain contains 3 multisubunit complexes succinate dehydrogenase (complex II, CII), ubiquinol-cytochrome c oxidoreductase (cytochrome b-c1 complex, complex III, CIII) and cytochrome c oxidase (complex IV, CIV), that cooperate to transfer electrons derived from NADH and succinate to molecular oxygen, creating an electrochemical gradient over the inner membrane that drives transmembrane transport and the ATP synthase. Cytochrome c oxidase is the component of the respiratory chain that catalyzes the reduction of oxygen to water. Electrons originating from reduced cytochrome c in the intermembrane space (IMS) are transferred via the dinuclear copper A center (CU(A)) of Cox2 and heme A of Cox1 to the active site in Cox1, a binuclear center (BNC) formed by heme A3 and copper B (CU(B)). The BNC reduces molecular oxygen to 2 water molecules using 4 electrons from cytochrome c in the IMS and 4 protons from the mitochondrial matrix. The sequence is that of Cytochrome c oxidase subunit 12, mitochondrial (cox-13) from Neurospora crassa (strain ATCC 24698 / 74-OR23-1A / CBS 708.71 / DSM 1257 / FGSC 987).